A 362-amino-acid chain; its full sequence is Phosphate acyltransferase (362 aa).

Positions 343-362 (TKKISTSTINPKTSETTKES) are disordered. Polar residues predominate over residues 344–356 (KKISTSTINPKTS).

This sequence belongs to the PlsX family. Homodimer. Probably interacts with PlsY.

The protein resides in the cytoplasm. It catalyses the reaction a fatty acyl-[ACP] + phosphate = an acyl phosphate + holo-[ACP]. It functions in the pathway lipid metabolism; phospholipid metabolism. Catalyzes the reversible formation of acyl-phosphate (acyl-PO(4)) from acyl-[acyl-carrier-protein] (acyl-ACP). This enzyme utilizes acyl-ACP as fatty acyl donor, but not acyl-CoA. The sequence is that of Phosphate acyltransferase from Aster yellows witches'-broom phytoplasma (strain AYWB).